The primary structure comprises 151 residues: 3-dehydroquinate dehydratase (151 aa).

Y26 acts as the Proton acceptor in catalysis. Substrate contacts are provided by N75, H81, and D88. The Proton donor role is filled by H101. Substrate contacts are provided by residues 102–103 and R112; that span reads LS.

It belongs to the type-II 3-dehydroquinase family. In terms of assembly, homododecamer.

It catalyses the reaction 3-dehydroquinate = 3-dehydroshikimate + H2O. It participates in metabolic intermediate biosynthesis; chorismate biosynthesis; chorismate from D-erythrose 4-phosphate and phosphoenolpyruvate: step 3/7. Functionally, catalyzes a trans-dehydration via an enolate intermediate. The protein is 3-dehydroquinate dehydratase of Shewanella sediminis (strain HAW-EB3).